A 62-amino-acid chain; its full sequence is uncharacterized protein (62 aa).

The disordered stretch occupies residues 1–62; that stretch reads MSSTAEEMAA…SNGEAKRKEK (62 aa). Over residues 28-37 the composition is skewed to basic and acidic residues; sequence TKSDRVEHKH.

This is an uncharacterized protein from Caenorhabditis elegans.